We begin with the raw amino-acid sequence, 181 residues long: ATP-dependent protease subunit HslV (181 aa).

Residue threonine 6 is part of the active site. 3 residues coordinate Na(+): glycine 162, cysteine 165, and threonine 168.

The protein belongs to the peptidase T1B family. HslV subfamily. A double ring-shaped homohexamer of HslV is capped on each side by a ring-shaped HslU homohexamer. The assembly of the HslU/HslV complex is dependent on binding of ATP.

It is found in the cytoplasm. It catalyses the reaction ATP-dependent cleavage of peptide bonds with broad specificity.. With respect to regulation, allosterically activated by HslU binding. In terms of biological role, protease subunit of a proteasome-like degradation complex believed to be a general protein degrading machinery. This is ATP-dependent protease subunit HslV from Nitratidesulfovibrio vulgaris (strain ATCC 29579 / DSM 644 / CCUG 34227 / NCIMB 8303 / VKM B-1760 / Hildenborough) (Desulfovibrio vulgaris).